We begin with the raw amino-acid sequence, 408 residues long: Peptidase T (408 aa).

His78 serves as a coordination point for Zn(2+). The active site involves Asp80. Residue Asp140 coordinates Zn(2+). The active-site Proton acceptor is Glu174. Residues Glu175, Asp197, and His379 each coordinate Zn(2+).

Belongs to the peptidase M20B family. Requires Zn(2+) as cofactor.

The protein localises to the cytoplasm. The catalysed reaction is Release of the N-terminal residue from a tripeptide.. Its function is as follows. Cleaves the N-terminal amino acid of tripeptides. The protein is Peptidase T of Staphylococcus aureus (strain Mu3 / ATCC 700698).